The following is a 418-amino-acid chain: Serine hydroxymethyltransferase (418 aa).

(6S)-5,6,7,8-tetrahydrofolate is bound by residues leucine 121 and 125-127 (GHL). Lysine 230 is modified (N6-(pyridoxal phosphate)lysine). (6S)-5,6,7,8-tetrahydrofolate is bound by residues glutamate 246 and 355 to 357 (SPF).

This sequence belongs to the SHMT family. Homodimer. Requires pyridoxal 5'-phosphate as cofactor.

It localises to the cytoplasm. It carries out the reaction (6R)-5,10-methylene-5,6,7,8-tetrahydrofolate + glycine + H2O = (6S)-5,6,7,8-tetrahydrofolate + L-serine. It functions in the pathway one-carbon metabolism; tetrahydrofolate interconversion. The protein operates within amino-acid biosynthesis; glycine biosynthesis; glycine from L-serine: step 1/1. In terms of biological role, catalyzes the reversible interconversion of serine and glycine with tetrahydrofolate (THF) serving as the one-carbon carrier. This reaction serves as the major source of one-carbon groups required for the biosynthesis of purines, thymidylate, methionine, and other important biomolecules. Also exhibits THF-independent aldolase activity toward beta-hydroxyamino acids, producing glycine and aldehydes, via a retro-aldol mechanism. The protein is Serine hydroxymethyltransferase of Streptococcus pneumoniae (strain 70585).